The primary structure comprises 101 residues: Toxin Tpa8 (101 aa).

A signal peptide spans 1 to 20; that stretch reads MVKSEMKLVIFSLFLLLIGV. The region spanning 24–98 is the LCN-type CS-alpha/beta domain; the sequence is KNGYPVIEGG…VMDRTKEYCE (75 aa). Intrachain disulfides connect Cys-44–Cys-70, Cys-56–Cys-75, Cys-60–Cys-77, and Cys-71–Cys-97.

This sequence belongs to the long (4 C-C) scorpion toxin superfamily. Sodium channel inhibitor family. Beta subfamily. In terms of tissue distribution, expressed by the venom gland.

It is found in the secreted. Excitatory insect beta-toxins induce a spastic paralysis. They bind voltage-independently at site-4 of sodium channels (Nav) and shift the voltage of activation toward more negative potentials thereby affecting sodium channel activation and promoting spontaneous and repetitive firing. The protein is Toxin Tpa8 of Tityus pachyurus (Colombian scorpion).